We begin with the raw amino-acid sequence, 154 residues long: MFASVELSSYRDQHFKGSRSEQERSLRDSCTLYVGNLSFYTTEEQIHELFSRCGDVRVIVMGLDKYKKTPCGFCFVEYYVRSEAEAAMRFVNGTRLDDRLIRVDWDAGFVEGRQYGRGKTGGQVRDEYRTDYDAGRGGYGKLLSQKIAPNTDNR.

MRNA-binding positions include Tyr10, Tyr33, 102 to 106 (RVDWD), 113 to 117 (RQYGR), and 123 to 124 (QV). Positions 30–108 (CTLYVGNLSF…RLIRVDWDAG (79 aa)) constitute an RRM domain.

The protein belongs to the RRM NCBP2 family. In terms of assembly, component of the nuclear cap-binding complex (CBC), a heterodimer composed of Cbp80 and Cbp20 that interacts with m7GpppG-capped RNA. Interacts with Ars2.

The protein localises to the nucleus. In terms of biological role, component of the cap-binding complex (CBC), which binds co-transcriptionally to the 5' cap of pre-mRNAs and is involved in various processes such as pre-mRNA splicing and RNA-mediated gene silencing (RNAi). The CBC complex is involved in miRNA-mediated RNA interference via its interaction with Ars2 and is required for primary microRNAs (miRNAs) processing. Also involved in innate immunity via the short interfering RNAs (siRNAs) processing machinery by restricting the viral RNA production. In the CBC complex, Cbp20 recognizes and binds capped RNAs (m7GpppG-capped RNA) but requires Cbp80 to stabilize the movement of its N-terminal loop and lock the CBC into a high affinity cap-binding state with the cap structure. The polypeptide is Nuclear cap-binding protein subunit 2 (Cbp20) (Drosophila melanogaster (Fruit fly)).